Reading from the N-terminus, the 152-residue chain is Large-conductance mechanosensitive channel (152 aa).

2 helical membrane passes run Val14 to Leu34 and Val84 to Leu104.

It belongs to the MscL family. Homopentamer.

It is found in the cell inner membrane. Functionally, channel that opens in response to stretch forces in the membrane lipid bilayer. May participate in the regulation of osmotic pressure changes within the cell. This Laribacter hongkongensis (strain HLHK9) protein is Large-conductance mechanosensitive channel.